The following is a 114-amino-acid chain: Putative pterin-4-alpha-carbinolamine dehydratase (114 aa).

Belongs to the pterin-4-alpha-carbinolamine dehydratase family.

It catalyses the reaction (4aS,6R)-4a-hydroxy-L-erythro-5,6,7,8-tetrahydrobiopterin = (6R)-L-erythro-6,7-dihydrobiopterin + H2O. This Methylococcus capsulatus (strain ATCC 33009 / NCIMB 11132 / Bath) protein is Putative pterin-4-alpha-carbinolamine dehydratase.